Here is a 282-residue protein sequence, read N- to C-terminus: MANQLILLKKDFFTDEQQAVTVADRYPQDVFAEHTHEFCELVMVWRGNGLHVLNERPYRITRGDLFYIRAEDKHSYTSVNDLVLQNIIYCPERLKLNVNWQAMIPGFQGAQWHPHWRLGSMGMNQARQVINQLEHESNGRDPLANEMAELLFGQLVMTLKRHRYATDDLPATSRETLLDKLITALANSLECPFALDAFCQQEQCSERVLRQQFRAQTGMTINQYLRQVRICHAQYLLQHSPLMISEISMQCGFEDSNYFSVVFTRETGMTPSQWRHLSNQSD.

The region spanning 179 to 277 (DKLITALANS…GMTPSQWRHL (99 aa)) is the HTH araC/xylS-type domain. DNA-binding regions (H-T-H motif) lie at residues 196–217 (DAFCQQEQCSERVLRQQFRAQT) and 244–267 (ISEISMQCGFEDSNYFSVVFTRET).

As to quaternary structure, binds DNA as a dimer.

The protein localises to the cytoplasm. In terms of biological role, activates expression of the rhaSR operon in response to L-rhamnose. The polypeptide is HTH-type transcriptional activator RhaR (Salmonella typhimurium (strain LT2 / SGSC1412 / ATCC 700720)).